The sequence spans 261 residues: Small ribosomal subunit protein uS2 (261 aa).

It belongs to the universal ribosomal protein uS2 family.

In Paracoccus denitrificans (strain Pd 1222), this protein is Small ribosomal subunit protein uS2.